The following is a 1031-amino-acid chain: Toll-like receptor 9 (1031 aa).

The first 25 residues, 1 to 25 (MGPCHGALHPLSLLVQAAALAVALA), serve as a signal peptide directing secretion. The Extracellular portion of the chain corresponds to 26 to 817 (QGTLPAFLPC…LCLDEALSWD (792 aa)). Cysteine 35 and cysteine 45 are oxidised to a cystine. Residue 47–51 (WLFLK) coordinates DNA. 26 LRR repeats span residues 62 to 85 (RGNV…DFVH), 87 to 110 (SSLR…HFPC), 122 to 147 (VPTL…SLVS), 150 to 166 (LSRT…LAGL), 167 to 190 (HSLR…ALQV), 198 to 221 (LGNL…LPPS), 223 to 242 (EYLL…DLAN), 243 to 268 (LTAL…CMEC), 283 to 306 (LNHL…WFHA), 308 to 332 (GNLM…AFQG), 333 to 356 (LAQL…HLHL), 363 to 386 (LLSL…TLRS), 390 to 413 (LPML…IFGA), 415 to 440 (PGLR…TGEV), 470 to 494 (CKTL…MFAR), 496 to 519 (SRLQ…QFMP), 520 to 543 (LTSL…SFTE), 545 to 572 (PRLE…SFVA), 574 to 598 (LPAL…LCSA), 600 to 622 (LRAL…LYLH), 627 to 650 (LRSL…TLDN), 652 to 675 (PKSL…SLVL), 676 to 699 (LPRL…SLPN), 701 to 723 (TQLQ…FFAL), 724 to 747 (ATRL…WFGS), and 749 to 772 (AGTL…AFVD). Asparagine 64 is a glycosylation site (N-linked (GlcNAc...) asparagine). DNA-binding positions include 72-77 (SNRIHH) and 95-109 (KWNC…MHFP). Cysteine 98 and cysteine 110 are disulfide-bonded. N-linked (GlcNAc...) asparagine glycosylation is present at asparagine 129. DNA-binding positions include tyrosine 132, arginine 152, and 179–181 (YYK). Residues cysteine 178 and cysteine 184 are joined by a disulfide bond. Asparagine 200 carries an N-linked (GlcNAc...) asparagine glycan. Tyrosine 208 serves as a coordination point for DNA. N-linked (GlcNAc...) asparagine glycosylation is found at asparagine 210 and asparagine 242. 2 cysteine pairs are disulfide-bonded: cysteine 255-cysteine 268 and cysteine 258-cysteine 265. A lipid anchor (S-palmitoyl cysteine) is attached at cysteine 258. Residue arginine 262 coordinates DNA. Cysteine 265 carries the S-palmitoyl cysteine lipid modification. Asparagine 340 carries an N-linked (GlcNAc...) asparagine glycan. Cysteine 470 and cysteine 500 form a disulfide bridge. N-linked (GlcNAc...) asparagine glycosylation is found at asparagine 474 and asparagine 513. Residue asparagine 567 is glycosylated (N-linked (GlcNAc...) asparagine). N-linked (GlcNAc...) asparagine glycans are attached at residues asparagine 669, asparagine 694, and asparagine 699. Asparagine 731 carries an N-linked (GlcNAc...) asparagine glycan. 2 disulfides stabilise this stretch: cysteine 764–cysteine 790 and cysteine 766–cysteine 809. The chain crosses the membrane as a helical span at residues 818-838 (CFGLSLLTVALGLAVPMLHHL). At 839-1031 (CGWDLWYCFH…NFCRGPTTAE (193 aa)) the chain is on the cytoplasmic side. The TIR domain occupies 866–1011 (LPYDAFVVFD…SFWAQLGTAL (146 aa)).

Belongs to the Toll-like receptor family. Monomer and homodimer. Exists as a monomer in the absence of unmethylated cytidine-phosphate-guanosine (CpG) ligand. Proteolytic processing of an insertion loop (Z-loop) is required for homodimerization upon binding to the unmethylated CpG ligand leading to its activation. Interacts with MYD88 via their respective TIR domains. Interacts with BTK. Interacts (via transmembrane domain) with UNC93B1. Interacts with CD300LH; the interaction may promote full activation of TLR9-triggered innate responses. Interacts with CNPY3 and HSP90B1; this interaction is required for proper folding in the endoplasmic reticulum. Interacts with SMPDL3B. Interacts with CD82; this interaction is essential for TLR9-dependent myddosome formation in response to CpG stimulation. Activated by proteolytic cleavage of the flexible loop between repeats LRR14 and LRR15 within the ectodomain. Cleavage requires UNC93B1. Proteolytically processed by first removing the majority of the ectodomain by either asparagine endopeptidase (AEP) or a cathepsin followed by a trimming event that is solely cathepsin mediated and required for optimal receptor signaling. In terms of processing, palmitoylated by ZDHHC3 in the Golgi regulates TLR9 trafficking from the Golgi to endosomes. Depalmitoylation by PPT1 controls the release of TLR9 from UNC93B1 in endosomes.

Its subcellular location is the endoplasmic reticulum membrane. It is found in the endosome. The protein resides in the lysosome. The protein localises to the cytoplasmic vesicle. It localises to the phagosome. Functionally, key component of innate and adaptive immunity. TLRs (Toll-like receptors) control host immune response against pathogens through recognition of molecular patterns specific to microorganisms. TLR9 is a nucleotide-sensing TLR which is activated by unmethylated cytidine-phosphate-guanosine (CpG) dinucleotides. Acts via MYD88 and TRAF6, leading to NF-kappa-B activation, cytokine secretion and the inflammatory response. Upon CpG stimulation, induces B-cell proliferation, activation, survival and antibody production. This is Toll-like receptor 9 (TLR9) from Felis catus (Cat).